The following is a 537-amino-acid chain: Tyrosine-protein kinase Fyn (537 aa).

A lipid anchor (N-myristoyl glycine) is attached at Gly2. Residues Cys3 and Cys6 are each lipidated (S-palmitoyl cysteine). Thr12 carries the post-translational modification Phosphothreonine; by PKC. The disordered stretch occupies residues 14–35 (LTEERDGSLNQSSGYRYGTDPT). Ser21 and Ser26 each carry phosphoserine. An SH3 domain is found at 82-143 (TGVTLFVALY…PSNYVAPVDS (62 aa)). The 98-residue stretch at 149-246 (WYFGKLGRKD…GLCCRLVVPC (98 aa)) folds into the SH2 domain. Tyr185 is modified (phosphotyrosine). A Protein kinase domain is found at 271 to 524 (LQLIKRLGNG…YLQGFLEDYF (254 aa)). Residues 277-285 (LGNGQFGEV) and Lys299 contribute to the ATP site. Asp390 (proton acceptor) is an active-site residue. Tyr420 is subject to Phosphotyrosine; by autocatalysis. Phosphotyrosine; by CSK is present on Tyr531.

This sequence belongs to the protein kinase superfamily. Tyr protein kinase family. SRC subfamily. In terms of assembly, interacts (via its SH3 domain) with PIK3R1 and PRMT8. Interacts with FYB1, PAG1, and SH2D1A. Interacts with CD79A (tyrosine-phosphorylated form); the interaction increases FYN activity. Interacts (via SH2 domain) with CSF1R (tyrosine phosphorylated). Interacts with TOM1L1 (phosphorylated form). Interacts with KDR (tyrosine phosphorylated). Interacts (via SH3 domain) with KLHL2 (via N-terminus). Interacts with SH2D1A and SLAMF1. Interacts with ITCH; the interaction phosphorylates ITCH and negatively regulates its activity. Interacts with FASLG. Interacts with RUNX3. Interacts with KIT. Interacts with EPHA8; possible downstream effector of EPHA8 in regulation of cell adhesion. Interacts with PTK2/FAK1; this interaction leads to PTK2/FAK1 phosphorylation and activation. Interacts with CAV1; this interaction couples integrins to the Ras-ERK pathway. Interacts with UNC119. Interacts (via SH2 domain) with PTPRH (phosphorylated form). Interacts with PTPRO (phosphorylated form). Interacts with PTPRB (phosphorylated form). Interacts with FYB2. Interacts with DSCAM. Interacts with SKAP1 and FYB1; this interaction promotes the phosphorylation of CLNK. Interacts with NEDD9; in the presence of PTK2. Mn(2+) is required as a cofactor. In terms of processing, autophosphorylated at Tyr-420. Phosphorylation on the C-terminal tail at Tyr-531 by CSK maintains the enzyme in an inactive state. PTPRC/CD45 dephosphorylates Tyr-531 leading to activation. Ultraviolet B (UVB) strongly increase phosphorylation at Thr-12 and kinase activity, and promotes translocation from the cytoplasm to the nucleus. Dephosphorylation at Tyr-420 by PTPN2 negatively regulates T-cell receptor signaling. Phosphorylated at tyrosine residues, which can be enhanced by NTN1. Post-translationally, palmitoylated. Palmitoylation at Cys-3 and Cys-6, probably by ZDHHC21, regulates subcellular location.

Its subcellular location is the cytoplasm. The protein resides in the nucleus. It is found in the cell membrane. It localises to the perikaryon. The enzyme catalyses L-tyrosyl-[protein] + ATP = O-phospho-L-tyrosyl-[protein] + ADP + H(+). Its activity is regulated as follows. Inhibited by phosphorylation of Tyr-531 by leukocyte common antigen and activated by dephosphorylation of this site. Functionally, non-receptor tyrosine-protein kinase that plays a role in many biological processes including regulation of cell growth and survival, cell adhesion, integrin-mediated signaling, cytoskeletal remodeling, cell motility, immune response and axon guidance. Inactive FYN is phosphorylated on its C-terminal tail within the catalytic domain. Following activation by PKA, the protein subsequently associates with PTK2/FAK1, allowing PTK2/FAK1 phosphorylation, activation and targeting to focal adhesions. Involved in the regulation of cell adhesion and motility through phosphorylation of CTNNB1 (beta-catenin) and CTNND1 (delta-catenin). Regulates cytoskeletal remodeling by phosphorylating several proteins including the actin regulator WAS and the microtubule-associated proteins MAP2 and MAPT. Promotes cell survival by phosphorylating AGAP2/PIKE-A and preventing its apoptotic cleavage. Participates in signal transduction pathways that regulate the integrity of the glomerular slit diaphragm (an essential part of the glomerular filter of the kidney) by phosphorylating several slit diaphragm components including NPHS1, KIRREL1 and TRPC6. Plays a role in neural processes by phosphorylating DPYSL2, a multifunctional adapter protein within the central nervous system, ARHGAP32, a regulator for Rho family GTPases implicated in various neural functions, and SNCA, a small pre-synaptic protein. Involved in reelin signaling by mediating phosphorylation of DAB1 following reelin (RELN)-binding to its receptor. Participates in the downstream signaling pathways that lead to T-cell differentiation and proliferation following T-cell receptor (TCR) stimulation. Phosphorylates PTK2B/PYK2 in response to T-cell receptor activation. Also participates in negative feedback regulation of TCR signaling through phosphorylation of PAG1, thereby promoting interaction between PAG1 and CSK and recruitment of CSK to lipid rafts. CSK maintains LCK and FYN in an inactive form. Promotes CD28-induced phosphorylation of VAV1. In mast cells, phosphorylates CLNK after activation of immunoglobulin epsilon receptor signaling. Can also promote CD244-mediated NK cell activation. This chain is Tyrosine-protein kinase Fyn, found in Bos taurus (Bovine).